The chain runs to 525 residues: Sensory neuron membrane protein 1 (525 aa).

Over 1-11 (MLLPKPLKYAA) the chain is Cytoplasmic. The helical transmembrane segment at 12–32 (IGGGVFVFGILIGWVIFPVIL) threads the bilayer. Topologically, residues 33-456 (KSQIKKEMAL…LKHQLFIPKR (424 aa)) are extracellular. N-linked (GlcNAc...) asparagine glycosylation is found at Asn67, Asn105, and Asn229. Cystine bridges form between Cys268/Cys333, Cys297/Cys352, and Cys335/Cys341. N-linked (GlcNAc...) asparagine glycosylation is present at Asn440. A helical transmembrane segment spans residues 457 to 477 (IVGVIRWWMVSFGLIAVLAGV). The Cytoplasmic portion of the chain corresponds to 478–525 (MYHFKDNIMGWAAKGESTTAKVNPEDGSNEQRGVSVIGQDREPPKVTM). The disordered stretch occupies residues 496-525 (TAKVNPEDGSNEQRGVSVIGQDREPPKVTM). Positions 516–525 (QDREPPKVTM) are enriched in basic and acidic residues.

Belongs to the CD36 family. As to expression, principal component of the olfactory cilia membrane. Localizes to the somata, dendritic neck and cilia of the olfactory neurons (at protein level). Not detected in the axons of ORNs, the cytoplasm of auxiliary cells or non-sensory structures. Expression is universal among ORNs but differential between neuron and sensillum types.

The protein resides in the cell membrane. Its function is as follows. Plays an olfactory role that is not restricted to pheromone sensitivity. May be involved in the odor detection properties of the olfactory receptor neurons (ORNs) rather than their differentiation and growth. This Antheraea polyphemus (Polyphemus moth) protein is Sensory neuron membrane protein 1.